The primary structure comprises 485 residues: Glutamyl-tRNA(Gln) amidotransferase subunit A (485 aa).

Catalysis depends on charge relay system residues K78 and S153. The Acyl-ester intermediate role is filled by S177.

This sequence belongs to the amidase family. GatA subfamily. Heterotrimer of A, B and C subunits.

The catalysed reaction is L-glutamyl-tRNA(Gln) + L-glutamine + ATP + H2O = L-glutaminyl-tRNA(Gln) + L-glutamate + ADP + phosphate + H(+). Its function is as follows. Allows the formation of correctly charged Gln-tRNA(Gln) through the transamidation of misacylated Glu-tRNA(Gln) in organisms which lack glutaminyl-tRNA synthetase. The reaction takes place in the presence of glutamine and ATP through an activated gamma-phospho-Glu-tRNA(Gln). In Trichlorobacter lovleyi (strain ATCC BAA-1151 / DSM 17278 / SZ) (Geobacter lovleyi), this protein is Glutamyl-tRNA(Gln) amidotransferase subunit A.